The sequence spans 291 residues: Nucleotide-binding protein lmo2474 (291 aa).

Residue 13–20 (GMSGAGKT) coordinates ATP. 63 to 66 (DLRG) serves as a coordination point for GTP.

This sequence belongs to the RapZ-like family.

Its function is as follows. Displays ATPase and GTPase activities. In Listeria monocytogenes serovar 1/2a (strain ATCC BAA-679 / EGD-e), this protein is Nucleotide-binding protein lmo2474.